The primary structure comprises 271 residues: tRNA (guanine-N(1)-)-methyltransferase (271 aa).

S-adenosyl-L-methionine is bound by residues G120 and 145–150 (IGDYVL).

It belongs to the RNA methyltransferase TrmD family. In terms of assembly, homodimer.

It localises to the cytoplasm. It carries out the reaction guanosine(37) in tRNA + S-adenosyl-L-methionine = N(1)-methylguanosine(37) in tRNA + S-adenosyl-L-homocysteine + H(+). Specifically methylates guanosine-37 in various tRNAs. The protein is tRNA (guanine-N(1)-)-methyltransferase of Bifidobacterium longum subsp. infantis (strain ATCC 15697 / DSM 20088 / JCM 1222 / NCTC 11817 / S12).